The sequence spans 665 residues: Beta-galactosidase LacZ (665 aa).

Arg-110 contacts substrate. Cys-114 is a binding site for Zn(2+). Residue Asn-148 coordinates substrate. Glu-149 serves as the catalytic Proton donor. Zn(2+) is bound by residues Cys-157, Cys-159, and Cys-162. Glu-303 serves as the catalytic Nucleophile. Residues Trp-311 and 351-354 each bind substrate; that span reads EKFH.

Belongs to the glycosyl hydrolase 42 family.

The catalysed reaction is Hydrolysis of terminal non-reducing beta-D-galactose residues in beta-D-galactosides.. The protein is Beta-galactosidase LacZ of Heyndrickxia coagulans (Weizmannia coagulans).